An 836-amino-acid polypeptide reads, in one-letter code: Protein translocase subunit SecA (836 aa).

ATP contacts are provided by residues glutamine 85, 103 to 107 (GEGKT), and aspartate 492. Positions 820, 822, 831, and 832 each coordinate Zn(2+).

It belongs to the SecA family. As to quaternary structure, monomer and homodimer. Part of the essential Sec protein translocation apparatus which comprises SecA, SecYEG and auxiliary proteins SecDF. Other proteins may also be involved. Zn(2+) is required as a cofactor.

Its subcellular location is the cell membrane. The protein resides in the cytoplasm. It catalyses the reaction ATP + H2O + cellular proteinSide 1 = ADP + phosphate + cellular proteinSide 2.. Part of the Sec protein translocase complex. Interacts with the SecYEG preprotein conducting channel. Has a central role in coupling the hydrolysis of ATP to the transfer of proteins into and across the cell membrane, serving as an ATP-driven molecular motor driving the stepwise translocation of polypeptide chains across the membrane. The chain is Protein translocase subunit SecA from Clostridium botulinum (strain Alaska E43 / Type E3).